The primary structure comprises 332 residues: Aspartate carbamoyltransferase catalytic subunit (332 aa).

The carbamoyl phosphate site is built by Arg-54 and Thr-55. L-aspartate is bound at residue Lys-82. Positions 104, 134, and 137 each coordinate carbamoyl phosphate. L-aspartate is bound by residues Arg-175 and Arg-230. Positions 271 and 272 each coordinate carbamoyl phosphate. Residues 312–332 (GGPDGDSTTSPGSGPEGGTTP) are disordered.

This sequence belongs to the aspartate/ornithine carbamoyltransferase superfamily. ATCase family. As to quaternary structure, heterododecamer (2C3:3R2) of six catalytic PyrB chains organized as two trimers (C3), and six regulatory PyrI chains organized as three dimers (R2).

It carries out the reaction carbamoyl phosphate + L-aspartate = N-carbamoyl-L-aspartate + phosphate + H(+). Its pathway is pyrimidine metabolism; UMP biosynthesis via de novo pathway; (S)-dihydroorotate from bicarbonate: step 2/3. Its function is as follows. Catalyzes the condensation of carbamoyl phosphate and aspartate to form carbamoyl aspartate and inorganic phosphate, the committed step in the de novo pyrimidine nucleotide biosynthesis pathway. The sequence is that of Aspartate carbamoyltransferase catalytic subunit from Beutenbergia cavernae (strain ATCC BAA-8 / DSM 12333 / CCUG 43141 / JCM 11478 / NBRC 16432 / NCIMB 13614 / HKI 0122).